The sequence spans 88 residues: Small ribosomal subunit protein uS15 (88 aa).

Positions 1–12 (MLTNTDRQQVIA) are enriched in polar residues. The disordered stretch occupies residues 1-23 (MLTNTDRQQVIAQYQRAPGDTGS).

Belongs to the universal ribosomal protein uS15 family. Part of the 30S ribosomal subunit. Forms a bridge to the 50S subunit in the 70S ribosome, contacting the 23S rRNA.

Functionally, one of the primary rRNA binding proteins, it binds directly to 16S rRNA where it helps nucleate assembly of the platform of the 30S subunit by binding and bridging several RNA helices of the 16S rRNA. In terms of biological role, forms an intersubunit bridge (bridge B4) with the 23S rRNA of the 50S subunit in the ribosome. This chain is Small ribosomal subunit protein uS15, found in Psychrobacter sp. (strain PRwf-1).